The sequence spans 354 residues: CX3C chemokine receptor 1 (354 aa).

Topologically, residues 1 to 32 are extracellular; that stretch reads MPTSFPELDLENFEYDDSAEACYLGDIVAFGT. Residues 33–60 form a helical membrane-spanning segment; sequence IFLSIFYSLVFTFGLVGNLLVVLALTNS. Topologically, residues 61-70 are cytoplasmic; that stretch reads RKSKSITDIY. Residues 71–91 traverse the membrane as a helical segment; it reads LLNLALSDLLFVATLPFWTHY. The Extracellular segment spans residues 92–104; the sequence is LISHEGLHNAMCK. Residues Cys-103 and Cys-176 are joined by a disulfide bond. Residues 105–126 traverse the membrane as a helical segment; sequence LTTAFFFIGFFGGIFFITVISI. Topologically, residues 127-143 are cytoplasmic; sequence DRYLAIVLAANSMNNRT. The chain crosses the membrane as a helical span at residues 144 to 168; it reads VQHGVTISLGVWAAAILVASPQFMF. The Extracellular segment spans residues 169 to 196; sequence TKRKDNECLGDYPEVLQEIWPVLRNSEV. A helical membrane pass occupies residues 197–216; it reads NILGFVLPLLIMSFCYFRIV. Residues 217-232 lie on the Cytoplasmic side of the membrane; the sequence is RTLFSCKNRKKARAIR. A helical membrane pass occupies residues 233–257; sequence LILLVVVVFFLFWTPYNIVIFLETL. Residues 258-274 are Extracellular-facing; that stretch reads KFYNFFPSCGMKRDLRW. A helical transmembrane segment spans residues 275–298; it reads ALSVTETVAFSHCCLNPFIYAFAG. At 299 to 354 the chain is on the cytoplasmic side; the sequence is EKFRRYLRHLYNKCLAVLCGRPVHAGFSTESQRSRQDSILSSLTHYTSEGEGSLLL. Thr-345 is modified (phosphothreonine).

The protein belongs to the G-protein coupled receptor 1 family. As to quaternary structure, found in a ternary complex with CX3CL1 and ITGAV:ITGB3 or ITGA4:ITGB1. This protein is not N-glycosylated which is unusual for G-protein-coupled receptors. Most abundant in adult spinal cord, brain, kidney, gut, uterus and testes.

Its subcellular location is the cell membrane. Functionally, receptor for the C-X3-C chemokine fractalkine (CX3CL1) present on many early leukocyte cells; CX3CR1-CX3CL1 signaling exerts distinct functions in different tissue compartments, such as immune response, inflammation, cell adhesion and chemotaxis. CX3CR1-CX3CL1 signaling mediates cell migratory functions. Responsible for the recruitment of natural killer (NK) cells to inflamed tissues. Acts as a regulator of inflammation process leading to atherogenesis by mediating macrophage and monocyte recruitment to inflamed atherosclerotic plaques, promoting cell survival. Involved in airway inflammation by promoting interleukin 2-producing T helper (Th2) cell survival in inflamed lung. Involved in the migration of circulating monocytes to non-inflamed tissues, where they differentiate into macrophages and dendritic cells. Acts as a negative regulator of angiogenesis, probably by promoting macrophage chemotaxis. Plays a key role in brain microglia by regulating inflammatory response in the central nervous system (CNS) and regulating synapse maturation. Required to restrain the microglial inflammatory response in the CNS and the resulting parenchymal damage in response to pathological stimuli. Involved in brain development by participating in synaptic pruning, a natural process during which brain microglia eliminates extra synapses during postnatal development. Synaptic pruning by microglia is required to promote the maturation of circuit connectivity during brain development. Acts as an important regulator of the gut microbiota by controlling immunity to intestinal bacteria and fungi. Expressed in lamina propria dendritic cells in the small intestine, which form transepithelial dendrites capable of taking up bacteria in order to provide defense against pathogenic bacteria. Required to initiate innate and adaptive immune responses against dissemination of commensal fungi (mycobiota) component of the gut: expressed in mononuclear phagocytes (MNPs) and acts by promoting induction of antifungal IgG antibodies response to confer protection against disseminated C.albicans or C.auris infection. Also acts as a receptor for C-C motif chemokine CCL26, inducing cell chemotaxis. The chain is CX3C chemokine receptor 1 from Rattus norvegicus (Rat).